The sequence spans 865 residues: Protein translocase subunit SecA (865 aa).

ATP contacts are provided by residues Gln93, 111–115 (GEGKT), and Asp501. 4 residues coordinate Zn(2+): Cys841, Cys843, Cys852, and Cys853.

Belongs to the SecA family. Monomer and homodimer. Part of the essential Sec protein translocation apparatus which comprises SecA, SecYEG and auxiliary proteins SecDF-YajC and YidC. The cofactor is Zn(2+).

Its subcellular location is the cell inner membrane. It is found in the cytoplasm. The catalysed reaction is ATP + H2O + cellular proteinSide 1 = ADP + phosphate + cellular proteinSide 2.. In terms of biological role, part of the Sec protein translocase complex. Interacts with the SecYEG preprotein conducting channel. Has a central role in coupling the hydrolysis of ATP to the transfer of proteins into and across the cell membrane, serving as an ATP-driven molecular motor driving the stepwise translocation of polypeptide chains across the membrane. The chain is Protein translocase subunit SecA from Helicobacter pylori (strain HPAG1).